Consider the following 121-residue polypeptide: Ribonuclease P protein component (121 aa).

The protein belongs to the RnpA family. Consists of a catalytic RNA component (M1 or rnpB) and a protein subunit.

It catalyses the reaction Endonucleolytic cleavage of RNA, removing 5'-extranucleotides from tRNA precursor.. In terms of biological role, RNaseP catalyzes the removal of the 5'-leader sequence from pre-tRNA to produce the mature 5'-terminus. It can also cleave other RNA substrates such as 4.5S RNA. The protein component plays an auxiliary but essential role in vivo by binding to the 5'-leader sequence and broadening the substrate specificity of the ribozyme. In Nitrosomonas eutropha (strain DSM 101675 / C91 / Nm57), this protein is Ribonuclease P protein component.